The chain runs to 595 residues: Leiomodin-1 (595 aa).

Disordered regions lie at residues 1 to 69 (MSKV…EAML), 81 to 322 (QREM…KVKN), and 467 to 568 (DKQR…QEKN). S12 is modified (phosphoserine). The segment covering 27–40 (EEMEELEKELDVVD) has biased composition (acidic residues). 8 stretches are compositionally biased toward basic and acidic residues: residues 81–110 (QREMSVDESKQVGRKTDAKNGEEKDSDASR), 117–127 (QDSDLGKEPKK), 134–192 (FSRD…EKTG), 200–223 (SRDKDKKKEEVKEPSKKEEVKLTA), 230–249 (GRREDGRLKESSKENKKPED), 257–287 (RDWRKEDEKVKKEENQPDKEVREESKTKAPE), 467–476 (DKQRQKRLQE), and 484–493 (SGEKKDRLEV). Position 85 is a phosphoserine (S85). Phosphoserine is present on S135. 8 consecutive repeat copies span residues 165–179 (AAVDRKESGKDGREE), 180–195 (RAAAARKEEEKTGSVK), 196–211 (NAGLSRDKDKKKEEVK), 212–226 (EPSKKEEVKLTAESR), 227–240 (NTVGRREDGRLKES), 242–255 (KENKKPEDEGIGSG), 256–271 (GRDWRKEDEKVKKEEN), and 272–288 (QPDKEVREESKTKAPEK). The segment at 165-288 (AAVDRKESGK…EESKTKAPEK (124 aa)) is 8 X approximate tandem repeats. The 5 X 4 AA approximate tandem repeats stretch occupies residues 503 to 522 (SPKPSPQPSPKPAPKNSPKK). 2 stretches are compositionally biased toward pro residues: residues 505 to 517 (KPSPQPSPKPAPK) and 527 to 538 (AAPPPPPPPLAP). S550 bears the Phosphoserine mark. One can recognise a WH2 domain in the interval 569–588 (SRDQLLAAIRSSNLKQLKKV).

The protein belongs to the tropomodulin family. Detected in aorta, urinary bladder and uterus (at protein level). Detected in smooth muscle cells. Detected in aorta, bladder, colon, intestine, stomach and uterus.

It is found in the cytoplasm. Its subcellular location is the myofibril. The protein resides in the sarcomere. It localises to the cytoskeleton. In terms of biological role, required for proper contractility of visceral smooth muscle cells. Mediates nucleation of actin filaments. This Mus musculus (Mouse) protein is Leiomodin-1 (Lmod1).